The sequence spans 167 residues: Putative C-type lectin-like domain family 1 (167 aa).

The Cytoplasmic segment spans residues M1–S67. The chain crosses the membrane as a helical; Signal-anchor for type II membrane protein span at residues F68–I88. Topologically, residues K89–I167 are extracellular. N-linked (GlcNAc...) asparagine glycans are attached at residues N109, N140, and N149. Residues S116 to I167 enclose the C-type lectin; atypical domain.

Expressed in spleen, lymph node, and tonsil. Lower expression in peripheral blood, bone marrow, and colon. No expression detected in thymus. Highly expressed in dendritic and B-cells.

The protein localises to the cell membrane. May function in mediating immune cell-cell interactions. May act as a T-cell costimulatory molecule, enhancing anti-CD3-induced proliferation. May play a role in the interaction of dendritic cells with T-cells and the cells of the adaptive immune response. The sequence is that of Putative C-type lectin-like domain family 1 from Homo sapiens (Human).